The primary structure comprises 1235 residues: Serine/threonine-protein kinase TAO2 (1235 aa).

Ser9 bears the Phosphoserine mark. A Protein kinase domain is found at 28-281; that stretch reads FSDLREIGHG…SEVLLKHRFV (254 aa). ATP-binding positions include 34 to 42 and Lys57; that span reads IGHGSFGAV. 106–108 provides a ligand contact to staurosporine; that stretch reads EYC. The active-site Proton acceptor is Asp151. Residue Gly155 coordinates staurosporine. Ser181 is modified (phosphoserine). The tract at residues 318–457 is disordered; it reads QEAPNGPGAE…PTSTSSSSAR (140 aa). Residues 350 to 374 are compositionally biased toward low complexity; it reads SSHSVPSMSISASSQSSSVNSLADA. Positions 375 to 395 are enriched in acidic residues; the sequence is SDNEEEEEEEEEEEEEEEEEG. Positions 396-411 are enriched in basic and acidic residues; that stretch reads PESREMAMMQEGEHTV. The residue at position 416 (Ser416) is a Phosphoserine. Coiled coils occupy residues 488 to 523 and 576 to 603; these read SALR…EEHS and KELA…LQEN. Ser658 is modified (phosphoserine). A coiled-coil region spans residues 683-715; sequence LRQHEATRELELRQLQAVQRTRAELTRLQHQTE. 3 positions are modified to phosphoserine: Ser777, Ser825, and Ser827. Positions 892–941 are disordered; that stretch reads GPVLTPVPEEEEEEEEEGGAPIGTPRDPGDGCPSPDIPPEPPPSHLRQYP. Positions 899–909 are enriched in acidic residues; it reads PEEEEEEEEEG. Residues 926–935 show a composition bias toward pro residues; that stretch reads PDIPPEPPPS. Helical transmembrane passes span 967-987, 989-1009, and 1014-1034; these read LLPL…GGGL, AALL…LFLC, and LPPS…VLSL. Arg1038 bears the Phosphoserine mark. The next 2 helical transmembrane spans lie at 1040–1060 and 1170–1190; these read LMGV…SLAL and LASC…LLKG. A disordered region spans residues 1210–1235; it reads SASRQLPPGTVAGRRSQTRRALPPWR.

The protein belongs to the protein kinase superfamily. STE Ser/Thr protein kinase family. STE20 subfamily. As to quaternary structure, self-associates. Interacts with MAP2K3 and MAP2K6. Interacts with tubulins. Interacts with MAP3K7 and interferes with MAP3K7-binding to CHUK and thus prevents NF-kappa-B activation. Isoform 2 interacts with PCDH8; this complex may also include CDH2. Mg(2+) serves as cofactor. Post-translationally, autophosphorylated. Phosphorylated by ATM. Phosphorylated on Ser-1038 by MAPK14. This phosphorylation is required PCDH8 for endocytosis.

The protein localises to the cytoplasmic vesicle membrane. It localises to the cytoplasm. The protein resides in the cytoskeleton. It is found in the cell projection. Its subcellular location is the dendrite. The catalysed reaction is L-seryl-[protein] + ATP = O-phospho-L-seryl-[protein] + ADP + H(+). The enzyme catalyses L-threonyl-[protein] + ATP = O-phospho-L-threonyl-[protein] + ADP + H(+). Moderately inhibited by staurosporine, a broad-range protein kinase inhibitor. Serine/threonine-protein kinase involved in different processes such as membrane blebbing and apoptotic bodies formation DNA damage response and MAPK14/p38 MAPK stress-activated MAPK cascade. Phosphorylates itself, MBP, activated MAPK8, MAP2K3, MAP2K6 and tubulins. Activates the MAPK14/p38 MAPK signaling pathway through the specific activation and phosphorylation of the upstream MAP2K3 and MAP2K6 kinases. In response to DNA damage, involved in the G2/M transition DNA damage checkpoint by activating the p38/MAPK14 stress-activated MAPK cascade, probably by mediating phosphorylation of upstream MAP2K3 and MAP2K6 kinases. May affect microtubule organization and stability. May play a role in the osmotic stress-MAPK8 pathway. Prevents MAP3K7-mediated activation of CHUK, and thus NF-kappa-B activation. Isoform 2, but not isoform 1, is required for PCDH8 endocytosis. Following homophilic interactions between PCDH8 extracellular domains, isoform 2 phosphorylates and activates MAPK14/p38 MAPK which in turn phosphorylates isoform 2. This process leads to PCDH8 endocytosis and CDH2 cointernalization. Both isoforms are involved in MAPK14/p38 MAPK activation. This is Serine/threonine-protein kinase TAO2 (Taok2) from Rattus norvegicus (Rat).